A 429-amino-acid chain; its full sequence is Serine--tRNA ligase (429 aa).

228 to 230 (TSE) provides a ligand contact to L-serine. 259–261 (RAE) serves as a coordination point for ATP. Glu282 contacts L-serine. 346-349 (EISS) contributes to the ATP binding site. Position 384 (Ser384) interacts with L-serine.

The protein belongs to the class-II aminoacyl-tRNA synthetase family. Type-1 seryl-tRNA synthetase subfamily. In terms of assembly, homodimer. The tRNA molecule binds across the dimer.

The protein localises to the cytoplasm. The catalysed reaction is tRNA(Ser) + L-serine + ATP = L-seryl-tRNA(Ser) + AMP + diphosphate + H(+). The enzyme catalyses tRNA(Sec) + L-serine + ATP = L-seryl-tRNA(Sec) + AMP + diphosphate + H(+). It functions in the pathway aminoacyl-tRNA biosynthesis; selenocysteinyl-tRNA(Sec) biosynthesis; L-seryl-tRNA(Sec) from L-serine and tRNA(Sec): step 1/1. Functionally, catalyzes the attachment of serine to tRNA(Ser). Is also able to aminoacylate tRNA(Sec) with serine, to form the misacylated tRNA L-seryl-tRNA(Sec), which will be further converted into selenocysteinyl-tRNA(Sec). This Anaplasma marginale (strain St. Maries) protein is Serine--tRNA ligase.